The following is a 577-amino-acid chain: Arginine--tRNA ligase (577 aa).

A 'HIGH' region motif is present at residues 122–132 (PNVAKEMHVGH).

It belongs to the class-I aminoacyl-tRNA synthetase family. As to quaternary structure, monomer.

The protein localises to the cytoplasm. The enzyme catalyses tRNA(Arg) + L-arginine + ATP = L-arginyl-tRNA(Arg) + AMP + diphosphate. This is Arginine--tRNA ligase from Vibrio vulnificus (strain CMCP6).